The sequence spans 64 residues: uncharacterized protein (64 aa).

To P.abyssi PAB3148.

This is an uncharacterized protein from Archaeoglobus fulgidus (strain ATCC 49558 / DSM 4304 / JCM 9628 / NBRC 100126 / VC-16).